Reading from the N-terminus, the 161-residue chain is Protein-export protein SecB (161 aa).

Belongs to the SecB family. As to quaternary structure, homotetramer, a dimer of dimers. One homotetramer interacts with 1 SecA dimer.

The protein localises to the cytoplasm. In terms of biological role, one of the proteins required for the normal export of preproteins out of the cell cytoplasm. It is a molecular chaperone that binds to a subset of precursor proteins, maintaining them in a translocation-competent state. It also specifically binds to its receptor SecA. The polypeptide is Protein-export protein SecB (Rhodopseudomonas palustris (strain BisA53)).